The following is a 437-amino-acid chain: Mitochondrial distribution and morphology protein 12 (437 aa).

The SMP-LTD domain maps to methionine 1–isoleucine 437. Residues aspartate 73–leucine 85 show a composition bias toward acidic residues. Disordered regions lie at residues aspartate 73–asparagine 101, serine 187–methionine 274, and serine 354–glycine 384. Residues serine 91–asparagine 101 are compositionally biased toward basic and acidic residues. 2 stretches are compositionally biased toward polar residues: residues aspartate 215–asparagine 240 and alanine 371–arginine 381.

It belongs to the MDM12 family. Component of the ER-mitochondria encounter structure (ERMES) or MDM complex, composed of mmm1, mdm10, mdm12 and mdm34. A mmm1 homodimer associates with one molecule of mdm12 on each side in a pairwise head-to-tail manner, and the SMP-LTD domains of mmm1 and mdm12 generate a continuous hydrophobic tunnel for phospholipid trafficking.

The protein resides in the mitochondrion outer membrane. Its subcellular location is the endoplasmic reticulum membrane. Functionally, component of the ERMES/MDM complex, which serves as a molecular tether to connect the endoplasmic reticulum (ER) and mitochondria. Components of this complex are involved in the control of mitochondrial shape and protein biogenesis, and function in nonvesicular lipid trafficking between the ER and mitochondria. Mdm12 is required for the interaction of the ER-resident membrane protein mmm1 and the outer mitochondrial membrane-resident beta-barrel protein mdm10. The mdm12-mmm1 subcomplex functions in the major beta-barrel assembly pathway that is responsible for biogenesis of all mitochondrial outer membrane beta-barrel proteins, and acts in a late step after the SAM complex. The mdm10-mdm12-mmm1 subcomplex further acts in the TOM40-specific pathway after the action of the mdm12-mmm1 complex. Essential for establishing and maintaining the structure of mitochondria and maintenance of mtDNA nucleoids. The chain is Mitochondrial distribution and morphology protein 12 from Aspergillus clavatus (strain ATCC 1007 / CBS 513.65 / DSM 816 / NCTC 3887 / NRRL 1 / QM 1276 / 107).